A 124-amino-acid chain; its full sequence is Protein BEX3 (124 aa).

A disordered region spans residues M1–L56. The span at N42–A53 shows a compositional bias: basic residues. The interaction with p75NTR/NGFR stretch occupies residues E81–L106. Residues E81–P124 are interaction with 14-3-3 epsilon. The short motif at I90–R100 is the Nuclear export signal element. Positions H113–H117 are his cluster. Residue C121 participates in Zn(2+) binding.

Belongs to the BEX family. As to quaternary structure, self-associates. Binds to the DEATH domain of p75NTR/NGFR. Interacts with 14-3-3 epsilon (YWHAE). Interacts with DIABLO/SMAC. Ubiquitinated. Degraded by the proteasome. As to expression, widely expressed.

The protein localises to the nucleus. It is found in the cytoplasm. The protein resides in the cytosol. Functionally, may be a signaling adapter molecule involved in NGFR/p75NTR-mediated apoptosis induced by NGF. Plays a role in zinc-triggered neuronal death. In absence of reductive stress, acts as a pseudosubstrate for the CRL2(FEM1B) complex: associates with FEM1B via zinc, thereby preventing association between FEM1B and its substrates. The chain is Protein BEX3 from Mus musculus (Mouse).